Consider the following 305-residue polypeptide: Putative lipid kinase SaurJH9_0749 (305 aa).

A DAGKc domain is found at 3–139 (NKYTHGVLFY…YDVIKINNQY (137 aa)). Residues Ser-44, 74-80 (GDGTVNE), and Thr-101 contribute to the ATP site. The Mg(2+) site is built by Ser-220, Asp-223, and Glu-225. Residue Glu-281 is the Proton acceptor of the active site.

Belongs to the diacylglycerol/lipid kinase family. It depends on Mg(2+) as a cofactor.

Its function is as follows. May catalyze the ATP-dependent phosphorylation of lipids other than diacylglycerol (DAG). This chain is Putative lipid kinase SaurJH9_0749, found in Staphylococcus aureus (strain JH9).